Here is a 63-residue protein sequence, read N- to C-terminus: Large ribosomal subunit protein bL35 (63 aa).

Belongs to the bacterial ribosomal protein bL35 family.

The polypeptide is Large ribosomal subunit protein bL35 (Thermobifida fusca (strain YX)).